A 354-amino-acid polypeptide reads, in one-letter code: UPF0283 membrane protein Meso_1416 (354 aa).

The disordered stretch occupies residues 1 to 28; sequence MSEPRRPAAFRIEPAPSPSPEATREDVR. A run of 2 helical transmembrane segments spans residues 71 to 91 and 105 to 125; these read LGAV…GLWA and LGWL…AIVV.

It belongs to the UPF0283 family.

The protein localises to the cell inner membrane. This chain is UPF0283 membrane protein Meso_1416, found in Chelativorans sp. (strain BNC1).